The primary structure comprises 306 residues: Ribosomal protein L11 methyltransferase (306 aa).

Residues Thr-154, Gly-179, Asp-201, and Asn-242 each contribute to the S-adenosyl-L-methionine site.

It belongs to the methyltransferase superfamily. PrmA family.

The protein localises to the cytoplasm. The catalysed reaction is L-lysyl-[protein] + 3 S-adenosyl-L-methionine = N(6),N(6),N(6)-trimethyl-L-lysyl-[protein] + 3 S-adenosyl-L-homocysteine + 3 H(+). Its function is as follows. Methylates ribosomal protein L11. This Stenotrophomonas maltophilia (strain R551-3) protein is Ribosomal protein L11 methyltransferase.